Reading from the N-terminus, the 80-residue chain is MSPKVQALIFIVGLITLLAAHAQEELSDNIESERGCSGAYKRCSSSQRCCEGRPCVCSAINSNCKCRKTYTELFKEYFEK.

The signal sequence occupies residues 1 to 22; sequence MSPKVQALIFIVGLITLLAAHA. The propeptide occupies 23–34; that stretch reads QEELSDNIESER. Intrachain disulfides connect C36–C50, C43–C55, C49–C66, and C57–C64.

Belongs to the neurotoxin 02 (plectoxin) family. 05 (U19-lycotoxin) subfamily. Expressed by the venom gland.

Its subcellular location is the secreted. In Lycosa singoriensis (Wolf spider), this protein is U19-lycotoxin-Ls1a.